Reading from the N-terminus, the 619-residue chain is tRNA (guanine(37)-N(1))-methyltransferase 2 (619 aa).

Residues 1-10 (MVSKLSLFRA) constitute a mitochondrion transit peptide. S-adenosyl-L-methionine is bound by residues R434, 472–473 (DL), 500–501 (DG), and N523.

It belongs to the class I-like SAM-binding methyltransferase superfamily. TRM5/TYW2 family. In terms of assembly, monomer.

Its subcellular location is the mitochondrion matrix. It is found in the nucleus. It localises to the cytoplasm. The enzyme catalyses guanosine(37) in tRNA + S-adenosyl-L-methionine = N(1)-methylguanosine(37) in tRNA + S-adenosyl-L-homocysteine + H(+). Specifically methylates the N1 position of guanosine-37 in various cytoplasmic and mitochondrial tRNAs. Methylation is not dependent on the nature of the nucleoside 5' of the target nucleoside. This is the first step in the biosynthesis of wybutosine (yW), a modified base adjacent to the anticodon of tRNAs and required for accurate decoding. In Arabidopsis thaliana (Mouse-ear cress), this protein is tRNA (guanine(37)-N(1))-methyltransferase 2.